Here is a 309-residue protein sequence, read N- to C-terminus: Taste receptor type 2 member 8 (309 aa).

Over 1–7 the chain is Extracellular; it reads MFSPADN. A helical membrane pass occupies residues 8–28; that stretch reads IFIILITGEFIIGILGNGYIG. Topologically, residues 29-50 are cytoplasmic; it reads LVNWIDWIKKKKISTIDCILTN. A helical membrane pass occupies residues 51 to 71; sequence LVISRICLISVMVVNGIVIVL. At 72–82 the chain is on the extracellular side; that stretch reads YPDVYTKTKLQ. The chain crosses the membrane as a helical span at residues 83–103; it reads IVICTFWTFANYLNMWFTACL. The Cytoplasmic segment spans residues 104–131; the sequence is NVFYSLKVANSSHPLFLWLKRKIDMVVR. The chain crosses the membrane as a helical span at residues 132–152; sequence WILLGCFAISLLVSLIIATVL. Residues 153–184 lie on the Extracellular side of the membrane; the sequence is SHDYRFHAIAKHKRNVTEMFHVSKMPYFEPLT. Asn-167 carries N-linked (GlcNAc...) asparagine glycosylation. The chain crosses the membrane as a helical span at residues 185-205; that stretch reads LFNLLAIVPFIVSLMSFFLLV. Topologically, residues 206–239 are cytoplasmic; the sequence is RSLWRHTKQIKLYATGGRDPSTEAHVRAIKTMTL. Residues 240 to 260 form a helical membrane-spanning segment; it reads LIFFFFLYYITSLLVXFSYLI. The Extracellular segment spans residues 261-266; that stretch reads TNYKLA. The helical transmembrane segment at 267-287 threads the bilayer; the sequence is MAFGEIVAILYPSGHSLILII. At 288–309 the chain is on the cytoplasmic side; the sequence is LNNKLRQASVRMLTCRKIACVT.

It belongs to the G-protein coupled receptor T2R family.

It is found in the membrane. In terms of biological role, receptor that may play a role in the perception of bitterness and is gustducin-linked. May play a role in sensing the chemical composition of the gastrointestinal content. The activity of this receptor may stimulate alpha gustducin, mediate PLC-beta-2 activation and lead to the gating of TRPM5. In Papio hamadryas (Hamadryas baboon), this protein is Taste receptor type 2 member 8 (TAS2R8).